A 321-amino-acid polypeptide reads, in one-letter code: MIFLTLEHIFTHISFSIVSIVITIHLMTLLVDGIVGLYDSSEKGMIATFLCITGFLVTRWIYSRHFPLSDLYESLIFLSWSFSIIHMVPKIRNHKNHLSAITAPSAIFTQGFATSGLLTEMHQSAILVPALQSQWLMMHVSMMVLSYAALLCGSLLSIALLVIRFRKNIEIFGKDNYLLIGSFSFGESQYVNERSNILRNTSFLSFRNYYRYQLIQQLDHWSYRVISLGFIFLTIGILSGAVWANEAWGAYWNWDPKETWAFITWTIFAIYLHTRTNKDLQGANSAIVASIGFLIIWICYFGVNLLGIGLHSYGSFTLTSN.

8 consecutive transmembrane segments (helical) span residues 17 to 37, 43 to 63, 71 to 91, 98 to 118, 143 to 163, 225 to 245, 258 to 275, and 286 to 306; these read IVSI…IVGL, KGMI…WIYS, LYES…VPKI, LSAI…SGLL, MVLS…LLVI, VISL…VWAN, ETWA…LHTR, and AIVA…VNLL.

Belongs to the CcmF/CycK/Ccl1/NrfE/CcsA family. May interact with Ccs1.

The protein resides in the plastid. It is found in the chloroplast thylakoid membrane. Its function is as follows. Required during biogenesis of c-type cytochromes (cytochrome c6 and cytochrome f) at the step of heme attachment. This is Cytochrome c biogenesis protein CcsA from Platanus occidentalis (Sycamore).